Here is a 704-residue protein sequence, read N- to C-terminus: Polyribonucleotide nucleotidyltransferase (704 aa).

The Mg(2+) site is built by aspartate 485 and aspartate 491. Residues 552 to 611 (PKILTMTINPDKIRDVIGPSGKMINKIIEDTGVKIDIEQDGTIYISSADTNMNNKAREII) form the KH domain. The 69-residue stretch at 621–689 (GQMYLGTVKR…NQGRVNLSRK (69 aa)) folds into the S1 motif domain.

The protein belongs to the polyribonucleotide nucleotidyltransferase family. Mg(2+) is required as a cofactor.

Its subcellular location is the cytoplasm. It carries out the reaction RNA(n+1) + phosphate = RNA(n) + a ribonucleoside 5'-diphosphate. Involved in mRNA degradation. Catalyzes the phosphorolysis of single-stranded polyribonucleotides processively in the 3'- to 5'-direction. The sequence is that of Polyribonucleotide nucleotidyltransferase from Halalkalibacterium halodurans (strain ATCC BAA-125 / DSM 18197 / FERM 7344 / JCM 9153 / C-125) (Bacillus halodurans).